Here is a 234-residue protein sequence, read N- to C-terminus: Small ribosomal subunit protein uS5 (234 aa).

The segment covering 1-10 (MEDIKTTTPE) has biased composition (polar residues). The disordered stretch occupies residues 1–69 (MEDIKTTTPE…KDGSGNKPNK (69 aa)). Basic and acidic residues predominate over residues 11 to 31 (VKNEENKTSEVKEGKALEKNN). In terms of domain architecture, S5 DRBM spans 78-141 (LEEKIVGVKK…KSAKNNMYKV (64 aa)).

Belongs to the universal ribosomal protein uS5 family. In terms of assembly, part of the 30S ribosomal subunit. Contacts proteins S4 and S8.

Its function is as follows. With S4 and S12 plays an important role in translational accuracy. Located at the back of the 30S subunit body where it stabilizes the conformation of the head with respect to the body. The chain is Small ribosomal subunit protein uS5 from Malacoplasma penetrans (strain HF-2) (Mycoplasma penetrans).